A 314-amino-acid chain; its full sequence is tRNA dimethylallyltransferase (314 aa).

10–17 contributes to the ATP binding site; it reads GPTAVGKT. Substrate is bound at residue 12-17; sequence TAVGKT. Residues 35–38 are interaction with substrate tRNA; that stretch reads DSMQ.

This sequence belongs to the IPP transferase family. As to quaternary structure, monomer. It depends on Mg(2+) as a cofactor.

It catalyses the reaction adenosine(37) in tRNA + dimethylallyl diphosphate = N(6)-dimethylallyladenosine(37) in tRNA + diphosphate. Its function is as follows. Catalyzes the transfer of a dimethylallyl group onto the adenine at position 37 in tRNAs that read codons beginning with uridine, leading to the formation of N6-(dimethylallyl)adenosine (i(6)A). The polypeptide is tRNA dimethylallyltransferase (Clostridium novyi (strain NT)).